The sequence spans 312 residues: Homoserine O-succinyltransferase (312 aa).

The Acyl-thioester intermediate role is filled by Cys142. Lys163 and Ser192 together coordinate substrate. His235 functions as the Proton acceptor in the catalytic mechanism. The active site involves Glu237. Residue Arg249 coordinates substrate.

Belongs to the MetA family.

It localises to the cytoplasm. It carries out the reaction L-homoserine + succinyl-CoA = O-succinyl-L-homoserine + CoA. Its pathway is amino-acid biosynthesis; L-methionine biosynthesis via de novo pathway; O-succinyl-L-homoserine from L-homoserine: step 1/1. In terms of biological role, transfers a succinyl group from succinyl-CoA to L-homoserine, forming succinyl-L-homoserine. In Shewanella halifaxensis (strain HAW-EB4), this protein is Homoserine O-succinyltransferase.